We begin with the raw amino-acid sequence, 1105 residues long: Probable diguanylate cyclase DgcE (1105 aa).

Helical transmembrane passes span 9–29 (LIAL…SFIF), 38–58 (QFGT…VAFY), 64–84 (MWPG…ILLF), 88–108 (SLNM…AVLL), 127–147 (LALG…VLLT), 156–176 (FLIW…LGLL), 190–207 (LLFE…LSWL), 211–228 (YLPW…WSAV), 236–256 (FLIF…DPSL), and 270–290 (WLPF…MYAF). The region spanning 300-370 (SETHFRNAME…QQVEKLISGE (71 aa)) is the PAS 1 domain. PAC domains lie at 374-426 (YSME…VNQQ) and 501-552 (FKLE…ALFQ). Positions 553 to 623 (EKERLHITLD…LMENIYSADT (71 aa)) constitute a PAS 2 domain. Residues 626–680 (SAIEQDVVLHCRSGGSYDVHYSITPLSTLDGSNIGSVLVIQDVTESRKMLRQLSY) form the PAC 3 domain. A GGDEF domain is found at 712–845 (QRHALVFIDL…GRGRVTVYEP (134 aa)). Mg(2+) is bound at residue Asp720. Substrate-binding residues include Asn728, His733, and Asp737. Asp763 is a binding site for Mg(2+). The active-site Proton acceptor is the Asp763. Arg783 provides a ligand contact to substrate. The region spanning 855–1104 (AAMSLDEQWR…LLVNSSYFAI (250 aa)) is the EAL domain.

Homodimer. The cofactor is Mg(2+).

It localises to the cell inner membrane. The catalysed reaction is 2 GTP = 3',3'-c-di-GMP + 2 diphosphate. It participates in purine metabolism; 3',5'-cyclic di-GMP biosynthesis. In terms of biological role, catalyzes the synthesis of cyclic-di-GMP (c-di-GMP) via the condensation of 2 GTP molecules. Involved in the control of the switch from cell motility to adhesion via regulation of cellular levels of c-di-GMP. Part of a signaling cascade that regulates curli biosynthesis. The cascade is composed of two c-di-GMP control modules, in which c-di-GMP controlled by the DgcE/PdeH pair (module I) regulates the activity of the DgcM/PdeR pair (module II), which in turn regulates activity of the transcription factor MlrA and expression of the master biofilm regulator csgD. The protein is Probable diguanylate cyclase DgcE of Escherichia coli (strain K12).